We begin with the raw amino-acid sequence, 402 residues long: Oxysterol-binding protein 8 (402 aa).

A coiled-coil region spans residues 328–361; it reads DRIALEEGNLDVAAKEKHNLEEKQREDKRQRVAE.

It belongs to the OSBP family.

In Dictyostelium discoideum (Social amoeba), this protein is Oxysterol-binding protein 8 (osbH).